The sequence spans 919 residues: Probable dipeptidyl-aminopeptidase B (919 aa).

Residues M1–P89 are disordered. At M1–R95 the chain is on the cytoplasmic side. Low complexity predominate over residues D27–L38. Positions H44 to G55 are enriched in polar residues. The helical; Signal-anchor for type II membrane protein transmembrane segment at I96–M116 threads the bilayer. The Vacuolar portion of the chain corresponds to A117–G919. The interval N121–I150 is disordered. Residues S127–S136 show a composition bias toward low complexity. N-linked (GlcNAc...) asparagine glycosylation is found at N207, N303, N355, N577, and N665. Catalysis depends on S760, which acts as the Charge relay system. 2 N-linked (GlcNAc...) asparagine glycosylation sites follow: N814 and N819. Residues D837 and H870 each act as charge relay system in the active site.

This sequence belongs to the peptidase S9B family.

The protein localises to the vacuole membrane. It carries out the reaction Release of an N-terminal dipeptide, Xaa-Yaa-|-Zaa-, from a polypeptide, preferentially when Yaa is Pro, provided Zaa is neither Pro nor hydroxyproline.. Type IV dipeptidyl-peptidase which removes N-terminal dipeptides sequentially from polypeptides having unsubstituted N-termini provided that the penultimate residue is proline. In Arthroderma otae (strain ATCC MYA-4605 / CBS 113480) (Microsporum canis), this protein is Probable dipeptidyl-aminopeptidase B (DAPB).